The chain runs to 868 residues: Sporulation-specific protein 75 (868 aa).

Topologically, residues 1–34 (MNATKELTFNLLNKFQDKERFGSAQRHAGISLKG) are extracellular. Asn-2 is a glycosylation site (N-linked (GlcNAc...) asparagine). Residues 35 to 55 (FISGILFSFLYFLFQLSLFII) form a helical membrane-spanning segment. Topologically, residues 56–127 (LRSRFKTIYQ…DNYLFLRFLK (72 aa)) are cytoplasmic. A helical membrane pass occupies residues 128–148 (LLIFFFAVLSIINIPILIPIH). Over 149–187 (YFSRDILKENEGERYEQSFRTTSKLDKWTMSNLSPNSSN) the chain is Extracellular. Asn-184 is a glycosylation site (N-linked (GlcNAc...) asparagine). A helical transmembrane segment spans residues 188–208 (TLICHLFLSIFVVLWFHFILS). Residues 209–481 (SELRFVNRLG…AKYFSANILR (273 aa)) lie on the Cytoplasmic side of the membrane. The helical transmembrane segment at 482–502 (IFVIIGWILPVAFLGLISQIP) threads the bilayer. The N-linked (GlcNAc...) asparagine glycan is linked to Asn-503. Over 503–527 (NISSLIPFTKIIHFQSPFIREVAKN) the chain is Extracellular. The chain crosses the membrane as a helical span at residues 528 to 548 (LIPIVTLIIIIEIVPYFFRWL). The Cytoplasmic segment spans residues 549–569 (SYLRGLKTGAQIEADVQNWYF). A helical membrane pass occupies residues 570–590 (VFVFIHLFVVVTISSGFSIII). Over 591–611 (ERLLNNPVSIPALLANDLPKC) the chain is Extracellular. The helical transmembrane segment at 612–632 (ANFFCSFVLIRGMAYAGGNLL) threads the bilayer. At 633 to 660 (RIKELLFELFYYKWKRSTPHAQFKRLKT) the chain is on the cytoplasmic side. The helical transmembrane segment at 661–683 (SLFFQLGSIYPIFSVLGCIGIIY) threads the bilayer. Residues 684-692 (SVVAPIILL) lie on the Extracellular side of the membrane. A helical transmembrane segment spans residues 693-713 (LCCISFSMVFFSFSYLFKYQY). The Cytoplasmic portion of the chain corresponds to 714–730 (NKENYSETFGKLYIQAL). A helical membrane pass occupies residues 731 to 751 (MQLYAGIYFMEFCLLGLFTLF). Over 752–753 (DQ) the chain is Extracellular. Residues 754–774 (YTLSTIMLVVFALTVITHSKI) form a helical membrane-spanning segment. Residues 775 to 868 (SKQIKSKPQR…DCHLENSHLH (94 aa)) are Cytoplasmic-facing.

The protein belongs to the CSC1 (TC 1.A.17) family.

It localises to the membrane. Its function is as follows. Acts as an osmosensitive calcium-permeable cation channel. Required for spore wall assembly and ascus formation. The chain is Sporulation-specific protein 75 (SPO75) from Saccharomyces cerevisiae (strain ATCC 204508 / S288c) (Baker's yeast).